The following is a 163-amino-acid chain: Crossover junction endodeoxyribonuclease RuvC (163 aa).

Catalysis depends on residues D9, E76, and D148. Mg(2+)-binding residues include D9, E76, and D148.

This sequence belongs to the RuvC family. Homodimer which binds Holliday junction (HJ) DNA. The HJ becomes 2-fold symmetrical on binding to RuvC with unstacked arms; it has a different conformation from HJ DNA in complex with RuvA. In the full resolvosome a probable DNA-RuvA(4)-RuvB(12)-RuvC(2) complex forms which resolves the HJ. Mg(2+) serves as cofactor.

It is found in the cytoplasm. It catalyses the reaction Endonucleolytic cleavage at a junction such as a reciprocal single-stranded crossover between two homologous DNA duplexes (Holliday junction).. The RuvA-RuvB-RuvC complex processes Holliday junction (HJ) DNA during genetic recombination and DNA repair. Endonuclease that resolves HJ intermediates. Cleaves cruciform DNA by making single-stranded nicks across the HJ at symmetrical positions within the homologous arms, yielding a 5'-phosphate and a 3'-hydroxyl group; requires a central core of homology in the junction. The consensus cleavage sequence is 5'-(A/T)TT(C/G)-3'. Cleavage occurs on the 3'-side of the TT dinucleotide at the point of strand exchange. HJ branch migration catalyzed by RuvA-RuvB allows RuvC to scan DNA until it finds its consensus sequence, where it cleaves and resolves the cruciform DNA. The sequence is that of Crossover junction endodeoxyribonuclease RuvC from Trichormus variabilis (strain ATCC 29413 / PCC 7937) (Anabaena variabilis).